The primary structure comprises 441 residues: UDP-N-acetylglucosamine--N-acetylmuramyl-(pentapeptide) pyrophosphoryl-undecaprenol N-acetylglucosamine transferase (441 aa).

UDP-N-acetyl-alpha-D-glucosamine contacts are provided by residues 28–30 (TGG), N140, R176, S204, I257, and Q302.

The protein belongs to the glycosyltransferase 28 family. MurG subfamily.

The protein resides in the cell inner membrane. It carries out the reaction di-trans,octa-cis-undecaprenyl diphospho-N-acetyl-alpha-D-muramoyl-L-alanyl-D-glutamyl-meso-2,6-diaminopimeloyl-D-alanyl-D-alanine + UDP-N-acetyl-alpha-D-glucosamine = di-trans,octa-cis-undecaprenyl diphospho-[N-acetyl-alpha-D-glucosaminyl-(1-&gt;4)]-N-acetyl-alpha-D-muramoyl-L-alanyl-D-glutamyl-meso-2,6-diaminopimeloyl-D-alanyl-D-alanine + UDP + H(+). The protein operates within cell wall biogenesis; peptidoglycan biosynthesis. Functionally, cell wall formation. Catalyzes the transfer of a GlcNAc subunit on undecaprenyl-pyrophosphoryl-MurNAc-pentapeptide (lipid intermediate I) to form undecaprenyl-pyrophosphoryl-MurNAc-(pentapeptide)GlcNAc (lipid intermediate II). The chain is UDP-N-acetylglucosamine--N-acetylmuramyl-(pentapeptide) pyrophosphoryl-undecaprenol N-acetylglucosamine transferase from Xanthomonas oryzae pv. oryzae (strain MAFF 311018).